A 185-amino-acid chain; its full sequence is Elongation factor P (185 aa).

It belongs to the elongation factor P family.

It localises to the cytoplasm. The protein operates within protein biosynthesis; polypeptide chain elongation. Involved in peptide bond synthesis. Stimulates efficient translation and peptide-bond synthesis on native or reconstituted 70S ribosomes in vitro. Probably functions indirectly by altering the affinity of the ribosome for aminoacyl-tRNA, thus increasing their reactivity as acceptors for peptidyl transferase. The sequence is that of Elongation factor P from Bacillus cereus (strain ATCC 10987 / NRS 248).